The chain runs to 77 residues: U8-lycotoxin-Ls1t (77 aa).

The signal sequence occupies residues 1 to 20; sequence MKLIIFTGLVPFAIVSLIEA. Positions 21–26 are excised as a propeptide; that stretch reads QAENEK.

This sequence belongs to the neurotoxin 19 (CSTX) family. 08 (U8-Lctx) subfamily. Contains 4 disulfide bonds. In terms of tissue distribution, expressed by the venom gland.

The protein localises to the secreted. The chain is U8-lycotoxin-Ls1t from Lycosa singoriensis (Wolf spider).